The chain runs to 55 residues: Serine protease inhibitor Kazal-type 1 (55 aa).

The Kazal-like domain occupies 2–55 (QGRDANCNYEFPGCPRNLEPVCGTDGNTYNNECLLCMENKKRDVPIRIQKDGPC). 3 cysteine pairs are disulfide-bonded: Cys-8–Cys-37, Cys-15–Cys-34, and Cys-23–Cys-55.

Its subcellular location is the secreted. Functionally, serine protease inhibitor which exhibits anti-trypsin activity. In the pancreas, protects against trypsin-catalyzed premature activation of zymogens. In terms of biological role, in the male reproductive tract, binds to sperm heads where it modulates sperm capacitance by inhibiting calcium uptake and nitrogen oxide (NO) production. The protein is Serine protease inhibitor Kazal-type 1 (SPINK1) of Monodelphis domestica (Gray short-tailed opossum).